A 285-amino-acid chain; its full sequence is Tumor necrosis factor ligand superfamily member 13B (285 aa).

Residues 1-46 lie on the Cytoplasmic side of the membrane; sequence MDDSTEREQSRLTSCLKKREEMKLKECVSILPRKESPSVRSSKDGK. A helical; Signal-anchor for type II membrane protein membrane pass occupies residues 47–67; sequence LLAATLLLALLSCCLTVVSFY. Topologically, residues 68-285 are extracellular; sequence QVAALQGDLA…VTFFGALKLL (218 aa). Residues 114–138 are disordered; the sequence is IFEPPAPGEGNSSQNSRNKRAVQGP. Asn-124 is a glycosylation site (N-linked (GlcNAc...) asparagine). Positions 145-284 constitute a THD domain; the sequence is DCLQLIADSE…DVTFFGALKL (140 aa). A disulfide bridge links Cys-232 with Cys-245. An N-linked (GlcNAc...) (high mannose) asparagine glycan is attached at Asn-242.

Belongs to the tumor necrosis factor family. As to quaternary structure, homotrimer. Isoform 2 heteromultimerizes with isoform 1, probably limiting the amount of functional isoform 1 on the cell surface. Isoform 3 is unlikely form trimers or bind to BAFF receptors. The soluble form derives from the membrane form by proteolytic processing. In terms of processing, isoform 2 is not efficiently shed from the membrane unlike isoform 1. Post-translationally, N-glycosylated. As to expression, abundantly expressed in peripheral blood Leukocytes and is specifically expressed in monocytes and macrophages. Also found in the spleen, lymph node, bone marrow, T-cells and dendritic cells. A lower expression seen in placenta, heart, lung, fetal liver, thymus, and pancreas. Isoform 2 is expressed in many myeloid cell lines.

Its subcellular location is the cell membrane. It localises to the secreted. Functionally, cytokine that binds to TNFRSF13B/TACI and TNFRSF17/BCMA. TNFSF13/APRIL binds to the same 2 receptors. Together, they form a 2 ligands -2 receptors pathway involved in the stimulation of B- and T-cell function and the regulation of humoral immunity. A third B-cell specific BAFF-receptor (BAFFR/BR3) promotes the survival of mature B-cells and the B-cell response. Its function is as follows. Isoform 2 seems to inhibit isoform 1 secretion and bioactivity. Acts as a transcription factor for its own parent gene, in association with NF-kappa-B p50 subunit, at least in autoimmune and proliferative B-cell diseases. The presence of Delta4BAFF is essential for soluble BAFF release by IFNG/IFN-gamma-stimulated monocytes and for B-cell survival. It can directly or indirectly regulate the differential expression of a large number of genes involved in the innate immune response and the regulation of apoptosis. The chain is Tumor necrosis factor ligand superfamily member 13B (TNFSF13B) from Homo sapiens (Human).